The primary structure comprises 1232 residues: DNA topoisomerase 2 (1232 aa).

Residues N65, N94, 122-124, 135-142, and 352-354 each bind ATP; these read SSN, GRHGYGAK, and QNK. Residues 432–546 enclose the Toprim domain; it reads RTLIVTEGDS…SLLNRNPGFI (115 aa). 3 residues coordinate Mg(2+): E438, D515, and D517. Positions 681-1097 constitute a Topo IIA-type catalytic domain; sequence LAHAVDGLKP…APVQMWLDEL (417 aa). Y771 acts as the O-(5'-phospho-DNA)-tyrosine intermediate in catalysis. Residues 952–961 form an interaction with DNA region; it reads SLTQRIYING. The disordered stretch occupies residues 1161–1184; that stretch reads YVPPPPSKRPHVGQSVGGGGGGGS. Gly residues predominate over residues 1175 to 1184; sequence SVGGGGGGGS.

This sequence belongs to the type II topoisomerase family. As to quaternary structure, homodimer. It depends on Mg(2+) as a cofactor. Mn(2+) serves as cofactor. The cofactor is Ca(2+).

It is found in the nucleus. The catalysed reaction is ATP-dependent breakage, passage and rejoining of double-stranded DNA.. Control of topological states of DNA by transient breakage and subsequent rejoining of DNA strands. Topoisomerase II makes double-strand breaks. The sequence is that of DNA topoisomerase 2 (TOP2) from Trypanosoma cruzi.